We begin with the raw amino-acid sequence, 95 residues long: uncharacterized protein (95 aa).

This is an uncharacterized protein from Escherichia coli O6:H1 (strain CFT073 / ATCC 700928 / UPEC).